The primary structure comprises 982 residues: ATP-dependent DNA helicase Q5 (982 aa).

The Helicase ATP-binding domain occupies M39–V213. M52–S59 contacts ATP. The DEAH box motif lies at D157 to H160. The region spanning N241–L398 is the Helicase C-terminal domain. Zn(2+) is bound by residues C412, C428, C432, and C435. Phosphoserine occurs at positions 489 and 492. The tract at residues G491 to M621 is interaction with POLR2A. T527 carries the phosphothreonine modification. Residues P653 to D726 are interaction with RAD51. 2 disordered regions span residues G675 to C797 and Q812 to P893. S728 bears the Phosphoserine; by CDK1 mark.

Belongs to the helicase family. RecQ subfamily. As to quaternary structure, monomer. Interacts with TOP2A, TOP3A and TOP3B. Interacts with RNA polymerase II subunit POLR2A. Identified in a complex with the RNA polymerase II core bound to DNA. Interacts with RAD51. Interacts with WRN; this interaction stimulates WRN helicase activity on DNA fork duplexes. Interacts with MUS1; this interaction promotes MUS81-dependent mitotic DNA synthesis. Requires Zn(2+) as cofactor. Phosphorylated by CDK1 at Ser-728; this phosphorylation is required for RECQL5-mediated disruption of RAD51 filaments on stalled replication forks.

The protein localises to the nucleus. It is found in the nucleoplasm. The catalysed reaction is Couples ATP hydrolysis with the unwinding of duplex DNA by translocating in the 3'-5' direction.. It carries out the reaction ATP + H2O = ADP + phosphate + H(+). Functionally, DNA helicase that plays an important role in DNA replication, transcription and repair. Binds to the RNA polymerase II subunit POLR2A during transcription elongation and suppresses transcription-associated genomic instability. Also associates with POLR1A and enforces the stability of ribosomal DNA arrays. Plays an important role in mitotic chromosome separation after cross-over events and cell cycle progress. Mechanistically, removes RAD51 filaments protecting stalled replication forks at common fragile sites and stimulates MUS81-EME1 endonuclease leading to mitotic DNA synthesis. Required for efficient DNA repair, including repair of inter-strand cross-links. Stimulates DNA decatenation mediated by TOP2A. Prevents sister chromatid exchange and homologous recombination. The sequence is that of ATP-dependent DNA helicase Q5 (Recql5) from Mus musculus (Mouse).